The chain runs to 81 residues: MTDLFAQADQTLDALGLRCPEPVMMVRKTVRHMDNGETLLIIADDPATTRDIPGFCRFMEHTLVAQETDTAPYRYLLRKGV.

The active-site Cysteine persulfide intermediate is C19.

This sequence belongs to the sulfur carrier protein TusA family. As to quaternary structure, interacts with IscS.

Its subcellular location is the cytoplasm. It participates in tRNA modification. Its function is as follows. Sulfur carrier protein involved in sulfur trafficking in the cell. Part of a sulfur-relay system required for 2-thiolation during synthesis of 2-thiouridine of the modified wobble base 5-methylaminomethyl-2-thiouridine (mnm(5)s(2)U) in tRNA. Interacts with IscS and stimulates its cysteine desulfurase activity. Accepts an activated sulfur from IscS, which is then transferred to TusD, and thus determines the direction of sulfur flow from IscS to 2-thiouridine formation. Also appears to be involved in sulfur transfer for the biosynthesis of molybdopterin. The protein is Sulfur carrier protein TusA of Serratia proteamaculans (strain 568).